The sequence spans 279 residues: MTVTLRPPSSVRRSAWVKNPKLKPFLPYVVCLPIFLAIWQVISAILGQDRLPGPINVVANTWMPYIVEPFFDNGGTSKGLGLQILISLQRVAIGYLLAACTGILVGGVLGMSKFLGKGLDPVIQVLRTVPPLAWFPISLMVFQDANTSAIFVIFITAIWPIIINTAVGINQIPDDYNNVARVLKLSKKDYILNILIPSTVPYVFAGLRIAVGLAWLAIVAAEMLKADGGIGYFIWDAYNAGGDGSSSQIILAIFYVGLVGLSLDRLVAWVGRLVSPVSR.

Helical transmembrane passes span 25-45 (FLPY…ISAI), 91-111 (VAIG…VLGM), 149-169 (AIFV…AVGI), 200-220 (VPYV…AIVA), and 249-269 (IILA…LVAW). In terms of domain architecture, ABC transmembrane type-1 spans 84 to 267 (ILISLQRVAI…LVGLSLDRLV (184 aa)).

Belongs to the binding-protein-dependent transport system permease family. CysTW subfamily. As to quaternary structure, the complex is composed of two ATP-binding proteins (NrtC and NrtD), two transmembrane proteins (NrtB) and a solute-binding protein (NrtA).

Its subcellular location is the cell inner membrane. In terms of biological role, part of the ABC transporter complex NrtABCD involved in nitrate uptake. The complex is probably also involved in nitrite transport. Probably responsible for the translocation of the substrate across the membrane. The sequence is that of Nitrate import permease protein NrtB from Synechococcus elongatus (strain ATCC 33912 / PCC 7942 / FACHB-805) (Anacystis nidulans R2).